The following is a 105-amino-acid chain: Large ribosomal subunit protein uL24 (105 aa).

It belongs to the universal ribosomal protein uL24 family. In terms of assembly, part of the 50S ribosomal subunit.

In terms of biological role, one of two assembly initiator proteins, it binds directly to the 5'-end of the 23S rRNA, where it nucleates assembly of the 50S subunit. Functionally, one of the proteins that surrounds the polypeptide exit tunnel on the outside of the subunit. In Xanthomonas axonopodis pv. citri (strain 306), this protein is Large ribosomal subunit protein uL24.